We begin with the raw amino-acid sequence, 718 residues long: LON peptidase N-terminal domain and RING finger protein 3 (718 aa).

Residues 1–69 (MESLRTEQML…PGTSTPESKV (69 aa)) are disordered. Positions 57–66 (EQSPGTSTPE) are enriched in polar residues. The stretch at 67-100 (SKVLLTQADALASRGRIREALEVYRQLSERQQLV) is one TPR 1 repeat. The segment at 158–196 (CRKCHGFLSDPVSLSCGHTFCKLCLERGRAADRRCALCG) adopts an RING-type 1 zinc-finger fold. 2 TPR repeats span residues 243-276 (ASQL…APND) and 278-310 (LLYS…RPMG). The segment at 322-413 (SQEEAAARGD…TDQGDKPALS (92 aa)) is disordered. Basic and acidic residues predominate over residues 339–352 (AKVKGDGQQHHMKD). The segment at 426–464 (CALCMRLFYEPVTTPCGHTFCLKCLERCLDHNAKCPLCK) adopts an RING-type 2 zinc-finger fold. Residues 505 to 714 (MEELSNLNKN…GIRRVLAFIS (210 aa)) form the Lon N-terminal domain.

The polypeptide is LON peptidase N-terminal domain and RING finger protein 3 (LONRF3) (Macaca fascicularis (Crab-eating macaque)).